We begin with the raw amino-acid sequence, 828 residues long: Periplasmic nitrate reductase (828 aa).

The segment at residues 1-31 (MKLSRRSFMKANAVAAAAAAAGLSVPGVARA) is a signal peptide (tat-type signal). The 4Fe-4S Mo/W bis-MGD-type domain maps to 39-95 (IKWDKAPCRFCGTGCGVLVGTQQGRVVACQGDPDAPVNRGLNCIKGYFLPKIMYGKD). The [4Fe-4S] cluster site is built by Cys46, Cys49, Cys53, and Cys81. Residues Lys83, Gln150, Asn175, Cys179, 212 to 219 (WGSNMAEM), 243 to 247 (STFQH), 262 to 264 (QSD), Met372, Gln376, Asn482, 508 to 509 (SD), Lys531, Asp558, and 718 to 727 (TGRVLEHWHT) each bind Mo-bis(molybdopterin guanine dinucleotide). Phe794 provides a ligand contact to substrate. The Mo-bis(molybdopterin guanine dinucleotide) site is built by Asn802 and Lys819.

This sequence belongs to the prokaryotic molybdopterin-containing oxidoreductase family. NasA/NapA/NarB subfamily. In terms of assembly, component of the periplasmic nitrate reductase NapAB complex composed of NapA and NapB. [4Fe-4S] cluster serves as cofactor. Mo-bis(molybdopterin guanine dinucleotide) is required as a cofactor. Predicted to be exported by the Tat system. The position of the signal peptide cleavage has not been experimentally proven.

The protein resides in the periplasm. The catalysed reaction is 2 Fe(II)-[cytochrome] + nitrate + 2 H(+) = 2 Fe(III)-[cytochrome] + nitrite + H2O. Functionally, catalytic subunit of the periplasmic nitrate reductase complex NapAB. Receives electrons from NapB and catalyzes the reduction of nitrate to nitrite. In Salmonella paratyphi A (strain ATCC 9150 / SARB42), this protein is Periplasmic nitrate reductase.